The primary structure comprises 242 residues: N-alpha-acetyltransferase 60 (242 aa).

Residues 1–192 (MTEVVPSSAL…GGHPPWTILD (192 aa)) are Cytoplasmic-facing. Residues 13–182 (VSLRLLCHDD…DGFTYVLYIN (170 aa)) form the N-acetyltransferase domain. Substrate is bound at residue Tyr-38. Position 79 is an N6-acetyllysine; by autocatalysis (Lys-79). Tyr-97 is an active-site residue. Leu-99 is a binding site for substrate. 101–103 (LGV) provides a ligand contact to acetyl-CoA. Residues Lys-105, Lys-109, and Lys-121 each carry the N6-acetyllysine; by autocatalysis modification. 109 to 114 (KHGIGS) is a binding site for acetyl-CoA. His-138 is an active-site residue. Residues Asn-143 and 150 to 153 (YENR) contribute to the acetyl-CoA site. The required for homodimerization stretch occupies residues 162-173 (PYYYSIRGVLKD). Tyr-165 is a substrate binding site. The segment at residues 193 to 236 (YIQHLGSALANLSPCSIPHRIYRQAHSLLCSFLPWSSISTKGGI) is an intramembrane region (helical). The Cytoplasmic portion of the chain corresponds to 237–242 (EYSRTM).

Belongs to the acetyltransferase family. NAA60 subfamily. As to quaternary structure, monomer and homodimer; monomer in presence of substrate and homodimer in its absence. Acetylated: autoacetylation is required for optimal acetyltransferase activity.

Its subcellular location is the golgi apparatus membrane. It carries out the reaction N-terminal L-methionyl-[transmembrane protein] + acetyl-CoA = N-terminal N(alpha)-acetyl-L-methionyl-[transmembrane protein] + CoA + H(+). The catalysed reaction is L-lysyl-[protein] + acetyl-CoA = N(6)-acetyl-L-lysyl-[protein] + CoA + H(+). Functionally, N-alpha-acetyltransferase that specifically mediates the acetylation of N-terminal residues of the transmembrane proteins, with a strong preference for N-termini facing the cytosol. Displays N-terminal acetyltransferase activity towards a range of N-terminal sequences including those starting with Met-Lys, Met-Val, Met-Ala and Met-Met. Required for normal chromosomal segregation during anaphase. May also show histone acetyltransferase activity; such results are however unclear in vivo and would require additional experimental evidences. In Mus musculus (Mouse), this protein is N-alpha-acetyltransferase 60 (Naa60).